The sequence spans 340 residues: DNA-directed RNA polymerase subunit alpha (340 aa).

Residues 1-236 are alpha N-terminal domain (alpha-NTD); the sequence is MLSLSKNWNT…EQLQLFIAFE (236 aa). Positions 251–340 are alpha C-terminal domain (alpha-CTD); the sequence is FSPYLLKRVD…LSKRYEDSYN (90 aa).

The protein belongs to the RNA polymerase alpha chain family. In terms of assembly, homodimer. The RNAP catalytic core consists of 2 alpha, 1 beta, 1 beta' and 1 omega subunit. When a sigma factor is associated with the core the holoenzyme is formed, which can initiate transcription.

The enzyme catalyses RNA(n) + a ribonucleoside 5'-triphosphate = RNA(n+1) + diphosphate. Its function is as follows. DNA-dependent RNA polymerase catalyzes the transcription of DNA into RNA using the four ribonucleoside triphosphates as substrates. In Rickettsia prowazekii (strain Madrid E), this protein is DNA-directed RNA polymerase subunit alpha.